The primary structure comprises 483 residues: UDP-N-acetylmuramoyl-L-alanyl-D-glutamate--2,6-diaminopimelate ligase (483 aa).

Residue Ser30 coordinates UDP-N-acetyl-alpha-D-muramoyl-L-alanyl-D-glutamate. Residue 109–115 (GTNGKTT) participates in ATP binding. Residues 151–152 (TT), Ser178, and Arg186 each bind UDP-N-acetyl-alpha-D-muramoyl-L-alanyl-D-glutamate. An N6-carboxylysine modification is found at Lys218. Residues Arg380, 403 to 406 (DNPR), Gly453, and Glu457 contribute to the meso-2,6-diaminopimelate site. The Meso-diaminopimelate recognition motif motif lies at 403–406 (DNPR).

This sequence belongs to the MurCDEF family. MurE subfamily. Requires Mg(2+) as cofactor. Carboxylation is probably crucial for Mg(2+) binding and, consequently, for the gamma-phosphate positioning of ATP.

The protein resides in the cytoplasm. The enzyme catalyses UDP-N-acetyl-alpha-D-muramoyl-L-alanyl-D-glutamate + meso-2,6-diaminopimelate + ATP = UDP-N-acetyl-alpha-D-muramoyl-L-alanyl-gamma-D-glutamyl-meso-2,6-diaminopimelate + ADP + phosphate + H(+). It participates in cell wall biogenesis; peptidoglycan biosynthesis. In terms of biological role, catalyzes the addition of meso-diaminopimelic acid to the nucleotide precursor UDP-N-acetylmuramoyl-L-alanyl-D-glutamate (UMAG) in the biosynthesis of bacterial cell-wall peptidoglycan. The polypeptide is UDP-N-acetylmuramoyl-L-alanyl-D-glutamate--2,6-diaminopimelate ligase (Chlamydia muridarum (strain MoPn / Nigg)).